A 103-amino-acid chain; its full sequence is Acylphosphatase-2 (103 aa).

Ser2 carries the post-translational modification N-acetylserine. Positions Ser13–Tyr103 constitute an Acylphosphatase-like domain. Active-site residues include Arg28 and Asn46.

This sequence belongs to the acylphosphatase family.

The catalysed reaction is an acyl phosphate + H2O = a carboxylate + phosphate + H(+). Functionally, its physiological role is not yet clear. The polypeptide is Acylphosphatase-2 (ACYP2) (Anas platyrhynchos (Mallard)).